The sequence spans 227 residues: MAYPMQLGFQDATSPIMEELLHFHDHTLMIVFLISSLVLYIISLMLTTKLTHTSTMDAQEVETVWTILPAIILILIALPSLRILYMMDEINNPSLTVKTMGHQWYWSYEYTDYEDLSFDSYMIPTSELKPGELRLLEVDNRVVLPMEMTVRMLVSSEDVLHSWAVPSLGLKTDAIPGRLNQATLMSTRPGLYYGQCSEICGSNHSFMPIVLELVPLKHFEEWSASMS.

The Mitochondrial intermembrane segment spans residues 1–14 (MAYPMQLGFQDATS). Residues 15–45 (PIMEELLHFHDHTLMIVFLISSLVLYIISLM) form a helical membrane-spanning segment. Topologically, residues 46–59 (LTTKLTHTSTMDAQ) are mitochondrial matrix. The chain crosses the membrane as a helical span at residues 60–87 (EVETVWTILPAIILILIALPSLRILYMM). Residues 88-227 (DEINNPSLTV…HFEEWSASMS (140 aa)) are Mitochondrial intermembrane-facing. 6 residues coordinate Cu cation: His-161, Cys-196, Glu-198, Cys-200, His-204, and Met-207. Position 198 (Glu-198) interacts with Mg(2+).

Belongs to the cytochrome c oxidase subunit 2 family. As to quaternary structure, component of the cytochrome c oxidase (complex IV, CIV), a multisubunit enzyme composed of 14 subunits. The complex is composed of a catalytic core of 3 subunits MT-CO1, MT-CO2 and MT-CO3, encoded in the mitochondrial DNA, and 11 supernumerary subunits COX4I, COX5A, COX5B, COX6A, COX6B, COX6C, COX7A, COX7B, COX7C, COX8 and NDUFA4, which are encoded in the nuclear genome. The complex exists as a monomer or a dimer and forms supercomplexes (SCs) in the inner mitochondrial membrane with NADH-ubiquinone oxidoreductase (complex I, CI) and ubiquinol-cytochrome c oxidoreductase (cytochrome b-c1 complex, complex III, CIII), resulting in different assemblies (supercomplex SCI(1)III(2)IV(1) and megacomplex MCI(2)III(2)IV(2)). Found in a complex with TMEM177, COA6, COX18, COX20, SCO1 and SCO2. Interacts with TMEM177 in a COX20-dependent manner. Interacts with COX20. Interacts with COX16. The cofactor is Cu cation.

It localises to the mitochondrion inner membrane. It carries out the reaction 4 Fe(II)-[cytochrome c] + O2 + 8 H(+)(in) = 4 Fe(III)-[cytochrome c] + 2 H2O + 4 H(+)(out). Its function is as follows. Component of the cytochrome c oxidase, the last enzyme in the mitochondrial electron transport chain which drives oxidative phosphorylation. The respiratory chain contains 3 multisubunit complexes succinate dehydrogenase (complex II, CII), ubiquinol-cytochrome c oxidoreductase (cytochrome b-c1 complex, complex III, CIII) and cytochrome c oxidase (complex IV, CIV), that cooperate to transfer electrons derived from NADH and succinate to molecular oxygen, creating an electrochemical gradient over the inner membrane that drives transmembrane transport and the ATP synthase. Cytochrome c oxidase is the component of the respiratory chain that catalyzes the reduction of oxygen to water. Electrons originating from reduced cytochrome c in the intermembrane space (IMS) are transferred via the dinuclear copper A center (CU(A)) of subunit 2 and heme A of subunit 1 to the active site in subunit 1, a binuclear center (BNC) formed by heme A3 and copper B (CU(B)). The BNC reduces molecular oxygen to 2 water molecules using 4 electrons from cytochrome c in the IMS and 4 protons from the mitochondrial matrix. This is Cytochrome c oxidase subunit 2 (MT-CO2) from Antilocapra americana (Pronghorn).